A 340-amino-acid chain; its full sequence is Ketol-acid reductoisomerase (NADP(+)) (340 aa).

The KARI N-terminal Rossmann domain maps to 1-182; that stretch reads MRVYYDRDCD…GGGRSGIIET (182 aa). Residues 24 to 27, arginine 48, serine 51, serine 53, and 83 to 86 each bind NADP(+); these read YGSQ and DELQ. Histidine 108 is a catalytic residue. Glycine 134 lines the NADP(+) pocket. The 147-residue stretch at 183–329 folds into the KARI C-terminal knotted domain; sequence NFRQECETDL…EKLRGMMPWI (147 aa). 4 residues coordinate Mg(2+): aspartate 191, glutamate 195, glutamate 227, and glutamate 231. Position 252 (serine 252) interacts with substrate.

This sequence belongs to the ketol-acid reductoisomerase family. Mg(2+) serves as cofactor.

It catalyses the reaction (2R)-2,3-dihydroxy-3-methylbutanoate + NADP(+) = (2S)-2-acetolactate + NADPH + H(+). The enzyme catalyses (2R,3R)-2,3-dihydroxy-3-methylpentanoate + NADP(+) = (S)-2-ethyl-2-hydroxy-3-oxobutanoate + NADPH + H(+). Its pathway is amino-acid biosynthesis; L-isoleucine biosynthesis; L-isoleucine from 2-oxobutanoate: step 2/4. It functions in the pathway amino-acid biosynthesis; L-valine biosynthesis; L-valine from pyruvate: step 2/4. Functionally, involved in the biosynthesis of branched-chain amino acids (BCAA). Catalyzes an alkyl-migration followed by a ketol-acid reduction of (S)-2-acetolactate (S2AL) to yield (R)-2,3-dihydroxy-isovalerate. In the isomerase reaction, S2AL is rearranged via a Mg-dependent methyl migration to produce 3-hydroxy-3-methyl-2-ketobutyrate (HMKB). In the reductase reaction, this 2-ketoacid undergoes a metal-dependent reduction by NADPH to yield (R)-2,3-dihydroxy-isovalerate. The polypeptide is Ketol-acid reductoisomerase (NADP(+)) (Cereibacter sphaeroides (strain ATCC 17029 / ATH 2.4.9) (Rhodobacter sphaeroides)).